Here is a 316-residue protein sequence, read N- to C-terminus: Beta-ketoacyl-[acyl-carrier-protein] synthase III 1 (316 aa).

Active-site residues include C112 and H243. An ACP-binding region spans residues 244–248 (QANYR). N273 is a catalytic residue.

Belongs to the thiolase-like superfamily. FabH family. As to quaternary structure, homodimer.

It is found in the cytoplasm. The catalysed reaction is malonyl-[ACP] + acetyl-CoA + H(+) = 3-oxobutanoyl-[ACP] + CO2 + CoA. It functions in the pathway lipid metabolism; fatty acid biosynthesis. Catalyzes the condensation reaction of fatty acid synthesis by the addition to an acyl acceptor of two carbons from malonyl-ACP. Catalyzes the first condensation reaction which initiates fatty acid synthesis and may therefore play a role in governing the total rate of fatty acid production. Possesses both acetoacetyl-ACP synthase and acetyl transacylase activities. Its substrate specificity determines the biosynthesis of branched-chain and/or straight-chain of fatty acids. In Vibrio vulnificus (strain CMCP6), this protein is Beta-ketoacyl-[acyl-carrier-protein] synthase III 1.